A 514-amino-acid polypeptide reads, in one-letter code: 2-isopropylmalate synthase (514 aa).

The 264-residue stretch at 5–268 (LIIFDTTLRD…DVGIDTTQIV (264 aa)) folds into the Pyruvate carboxyltransferase domain. Mn(2+) contacts are provided by Asp-14, His-202, His-204, and Asn-239. Residues 395–514 (KFVSLSQRSE…KDDKLNPQRA (120 aa)) are regulatory domain.

It belongs to the alpha-IPM synthase/homocitrate synthase family. LeuA type 1 subfamily. Homodimer. Mn(2+) serves as cofactor.

It localises to the cytoplasm. It carries out the reaction 3-methyl-2-oxobutanoate + acetyl-CoA + H2O = (2S)-2-isopropylmalate + CoA + H(+). It participates in amino-acid biosynthesis; L-leucine biosynthesis; L-leucine from 3-methyl-2-oxobutanoate: step 1/4. Its function is as follows. Catalyzes the condensation of the acetyl group of acetyl-CoA with 3-methyl-2-oxobutanoate (2-ketoisovalerate) to form 3-carboxy-3-hydroxy-4-methylpentanoate (2-isopropylmalate). This Burkholderia cenocepacia (strain HI2424) protein is 2-isopropylmalate synthase.